We begin with the raw amino-acid sequence, 310 residues long: MVAAIRVPRSQRAKRELLKHAPKLVETGKKTLILHGTKTSAVLNSVLADLFHLKRDNAVKYSKKNDNIRPFESGGETSLEFFSLKTDCSLIVYGSHSKKRPNNLVLGRTYDHHIYDLVEVGVENYKSIESYVYDKKLAPKLGSKPFFAFIGEHFESVEELKHLKEVLLDLFKGEVVENLNLAGVDRVFVCTAISPTTVYMMHCALRLKRSGTSIPRIELVEVGPSMDLVVRRHRYPVESLKKEAMKTADHAKKMKNVTKDPVHGKLGKVYIPDQQIAKMSLSNDVKGLKRERREAKKNKDHSKKQKINPE.

One can recognise a Brix domain in the interval 29 to 239 (KKTLILHGTK…VRRHRYPVES (211 aa)). The interval 281 to 310 (LSNDVKGLKRERREAKKNKDHSKKQKINPE) is disordered. Positions 295 to 310 (AKKNKDHSKKQKINPE) are enriched in basic residues.

This sequence belongs to the RPF2 family.

It is found in the nucleus. The protein localises to the nucleolus. The sequence is that of Ribosome production factor 2 homolog from Oryza sativa subsp. japonica (Rice).